A 551-amino-acid polypeptide reads, in one-letter code: Membrane protein insertase YidC (551 aa).

A helical membrane pass occupies residues 3 to 23; the sequence is ANHIRILLLVTIAIMFISLMG. Polar residues predominate over residues 33–47; sequence NTKQQTSATQNNSHY. The tract at residues 33 to 59 is disordered; the sequence is NTKQQTSATQNNSHYDNADSSTNTDVT. Residues 50–59 are compositionally biased toward low complexity; it reads ADSSTNTDVT. A run of 3 helical transmembrane segments spans residues 361–381, 431–451, and 504–524; these read LVGNWGLAIILVTCLIKLIFY, LSGCLPMLIQIPIFISLYWVL, and VMMFLPVIFTFLFASFPSGLV.

The protein belongs to the OXA1/ALB3/YidC family. Type 1 subfamily. Interacts with the Sec translocase complex via SecD. Specifically interacts with transmembrane segments of nascent integral membrane proteins during membrane integration.

The protein resides in the cell inner membrane. Its function is as follows. Required for the insertion and/or proper folding and/or complex formation of integral membrane proteins into the membrane. Involved in integration of membrane proteins that insert both dependently and independently of the Sec translocase complex, as well as at least some lipoproteins. Aids folding of multispanning membrane proteins. The sequence is that of Membrane protein insertase YidC from Francisella tularensis subsp. tularensis (strain SCHU S4 / Schu 4).